We begin with the raw amino-acid sequence, 318 residues long: MPKRGKKGAVAEDGDELKTEPEAKKSKTAAKKNDKEAAGEGPALYEDPPDQKTSPSGKPATLKICSWNVDGLRAWIKKKGLDWVKEEAPDILCLQETKCSENKLPAELQELPGLSYQYWSAPXXKEGYSGVGLLSRQCPLKVSYGIGEEEHDQEGRVIVAEFDSFVLVTAYVPNAGRGLVRLEYRQRWDEAFRRFLKGLASRKPLVLCGDLNVAHEEIDLRNPKGNKKNAGFTPQERQGFGELLQAVPLADSFRHLYPNTPYAYTFWTYMMNARSKNVGWRLDYFLLSHSLLPALCDSKIRSKALGSDHCPITLYLAL.

The tract at residues 1–33 is necessary for interaction with YBX1, binding to RNA, association together with NPM1 to rRNA, endoribonuclease activity on abasic RNA and localization in the nucleoli; the sequence is MPKRGKKGAVAEDGDELKTEPEAKKSKTAAKKN. The segment at 1–60 is disordered; the sequence is MPKRGKKGAVAEDGDELKTEPEAKKSKTAAKKNDKEAAGEGPALYEDPPDQKTSPSGKPA. An N6-acetyllysine; by EP300 mark is found at lysine 6 and lysine 7. The Nuclear localization signal (NLS) motif lies at 8 to 13; it reads GAVAED. The segment covering 16–38 has biased composition (basic and acidic residues); the sequence is ELKTEPEAKKSKTAAKKNDKEAA. A necessary for interaction with NPM1 and for efficient rRNA binding region spans residues 23 to 33; the sequence is AKKSKTAAKKN. An N6-acetyllysine mark is found at lysine 27, lysine 31, lysine 32, and lysine 35. The residue at position 54 (serine 54) is a Phosphoserine. A Nuclear export signal (NES) motif is present at residues 64-80; the sequence is ICSWNVDGLRAWIKKKG. Cysteine 65 bears the S-nitrosocysteine; alternate mark. Cysteine 65 and cysteine 93 form a disulfide bridge. Mg(2+) is bound at residue aspartate 70. Cysteine 93 carries the S-nitrosocysteine; alternate modification. Glutamate 96 serves as a coordination point for Mg(2+). Tyrosine 171 is a catalytic residue. N6-acetyllysine is present on lysine 197. Positions 210 and 212 each coordinate Mg(2+). Aspartate 210 acts as the Proton donor/acceptor in catalysis. Threonine 233 carries the phosphothreonine; by CDK5 modification. The interval 289-318 is mitochondrial targeting sequence (MTS); the sequence is HSLLPALCDSKIRSKALGSDHCPITLYLAL. Residue aspartate 308 coordinates Mg(2+). Cysteine 310 is modified (S-nitrosocysteine).

It belongs to the DNA repair enzymes AP/ExoA family. Monomer. Homodimer; disulfide-linked. Component of the SET complex, composed of at least APEX1, SET, ANP32A, HMGB2, NME1 and TREX1. Associates with the dimer XRCC5/XRCC6 in a DNA-dependent manner. Interacts with SIRT1; the interaction is increased in the context of genotoxic stress. Interacts with HDAC1, HDAC2 and HDAC3; the interactions are not dependent on the APEX1 acetylation status. Interacts with XRCC1; the interaction is induced by SIRT1 and increased with the APEX1 acetylated form. Interacts with NPM1 (via N-terminal domain); the interaction is RNA-dependent and decreases in hydrogen peroxide-damaged cells. Interacts (via N-terminus) with YBX1 (via C-terminus); the interaction is increased in presence of APEX1 acetylated at Lys-6 and Lys-7. Interacts with HNRNPL; the interaction is DNA-dependent. Interacts (via N-terminus) with KPNA1 and KPNA2. Interacts with TXN; the interaction stimulates the FOS/JUN AP-1 complex DNA-binding activity in a redox-dependent manner. Interacts with GZMA, KRT8, MDM2, POLB, PRDX6, PRPF19, RPLP0, TOMM20 and WDR77. Binds to CDK5. Mg(2+) serves as cofactor. Mn(2+) is required as a cofactor. Post-translationally, phosphorylated. Phosphorylation by kinase PKC or casein kinase CK2 results in enhanced redox activity that stimulates binding of the FOS/JUN AP-1 complex to its cognate binding site. AP-endodeoxyribonuclease activity is not affected by CK2-mediated phosphorylation. Phosphorylation of Thr-233 by CDK5 in response to MPP(+)/MPTP (1-methyl-4-phenylpyridinium) reduces AP-endodeoxyribonuclease activity resulting in accumulation of DNA damage and contributing to neuronal death. In terms of processing, acetylated on Lys-6 and Lys-7. Acetylation is increased by the transcriptional coactivator EP300 acetyltransferase, genotoxic agents like H(2)O(2) and methyl methanesulfonate (MMS). Acetylation increases its binding affinity to the negative calcium response element (nCaRE) DNA promoter. The acetylated form induces a stronger binding of YBX1 to the Y-box sequence in the MDR1 promoter than the unacetylated form. Deacetylated on lysines. Lys-6 and Lys-7 are deacetylated by SIRT1. Cleaved at Lys-31 by granzyme A to create the mitochondrial form; leading in reduction of binding to DNA, AP endodeoxyribonuclease activity, redox activation of transcription factors and to enhanced cell death. Cleaved by granzyme K; leading to intracellular ROS accumulation and enhanced cell death after oxidative stress. Post-translationally, cys-69 and Cys-93 are nitrosylated in response to nitric oxide (NO) and lead to the exposure of the nuclear export signal (NES). In terms of processing, ubiquitinated by MDM2; leading to translocation to the cytoplasm and proteasomal degradation.

The protein localises to the nucleus. It is found in the nucleolus. It localises to the nucleus speckle. Its subcellular location is the endoplasmic reticulum. The protein resides in the cytoplasm. The protein localises to the mitochondrion. The enzyme catalyses Exonucleolytic cleavage in the 3'- to 5'-direction to yield nucleoside 5'-phosphates.. NPM1 stimulates endodeoxyribonuclease activity on double-stranded DNA with AP sites, but inhibits endoribonuclease activity on single-stranded RNA containing AP sites. Its function is as follows. Multifunctional protein that plays a central role in the cellular response to oxidative stress. The two major activities of APEX1 are DNA repair and redox regulation of transcriptional factors. Functions as an apurinic/apyrimidinic (AP) endodeoxyribonuclease in the DNA base excision repair (BER) pathway of DNA lesions induced by oxidative and alkylating agents. Initiates repair of AP sites in DNA by catalyzing hydrolytic incision of the phosphodiester backbone immediately adjacent to the damage, generating a single-strand break with 5'-deoxyribose phosphate and 3'-hydroxyl ends. Also incises at AP sites in the DNA strand of DNA/RNA hybrids, single-stranded DNA regions of R-loop structures, and single-stranded RNA molecules. Has 3'-5' exoribonuclease activity on mismatched deoxyribonucleotides at the 3' termini of nicked or gapped DNA molecules during short-patch BER. Possesses DNA 3' phosphodiesterase activity capable of removing lesions (such as phosphoglycolate) blocking the 3' side of DNA strand breaks. May also play a role in the epigenetic regulation of gene expression by participating in DNA demethylation. Acts as a loading factor for POLB onto non-incised AP sites in DNA and stimulates the 5'-terminal deoxyribose 5'-phosphate (dRp) excision activity of POLB. Plays a role in the protection from granzyme-mediated cellular repair leading to cell death. Also involved in the DNA cleavage step of class switch recombination (CSR). On the other hand, APEX1 also exerts reversible nuclear redox activity to regulate DNA binding affinity and transcriptional activity of transcriptional factors by controlling the redox status of their DNA-binding domain, such as the FOS/JUN AP-1 complex after exposure to IR. Involved in calcium-dependent down-regulation of parathyroid hormone (PTH) expression by binding to negative calcium response elements (nCaREs). Together with HNRNPL or the dimer XRCC5/XRCC6, associates with nCaRE, acting as an activator of transcriptional repression. Stimulates the YBX1-mediated MDR1 promoter activity, when acetylated at Lys-6 and Lys-7, leading to drug resistance. Also acts as an endoribonuclease involved in the control of single-stranded RNA metabolism. Plays a role in regulating MYC mRNA turnover by preferentially cleaving in between UA and CA dinucleotides of the MYC coding region determinant (CRD). In association with NMD1, plays a role in the rRNA quality control process during cell cycle progression. Associates, together with YBX1, on the MDR1 promoter. Together with NPM1, associates with rRNA. Binds DNA and RNA. This Gorilla gorilla gorilla (Western lowland gorilla) protein is DNA repair nuclease/redox regulator APEX1 (APEX1).